The primary structure comprises 277 residues: Formamidopyrimidine-DNA glycosylase (277 aa).

Proline 2 functions as the Schiff-base intermediate with DNA in the catalytic mechanism. The active-site Proton donor is the glutamate 3. The active-site Proton donor; for beta-elimination activity is the lysine 58. DNA contacts are provided by histidine 94, arginine 113, and arginine 156. The segment at 241–277 (LVYGREGVPCPNCGAEHPIQRITQAGRSTFFCPTCQK) adopts an FPG-type zinc-finger fold. The Proton donor; for delta-elimination activity role is filled by arginine 267.

Belongs to the FPG family. Monomer. The cofactor is Zn(2+).

The enzyme catalyses Hydrolysis of DNA containing ring-opened 7-methylguanine residues, releasing 2,6-diamino-4-hydroxy-5-(N-methyl)formamidopyrimidine.. It carries out the reaction 2'-deoxyribonucleotide-(2'-deoxyribose 5'-phosphate)-2'-deoxyribonucleotide-DNA = a 3'-end 2'-deoxyribonucleotide-(2,3-dehydro-2,3-deoxyribose 5'-phosphate)-DNA + a 5'-end 5'-phospho-2'-deoxyribonucleoside-DNA + H(+). Involved in base excision repair of DNA damaged by oxidation or by mutagenic agents. Acts as a DNA glycosylase that recognizes and removes damaged bases. Has a preference for oxidized purines, such as 7,8-dihydro-8-oxoguanine (8-oxoG). Has AP (apurinic/apyrimidinic) lyase activity and introduces nicks in the DNA strand. Cleaves the DNA backbone by beta-delta elimination to generate a single-strand break at the site of the removed base with both 3'- and 5'-phosphates. The protein is Formamidopyrimidine-DNA glycosylase of Gluconobacter oxydans (strain 621H) (Gluconobacter suboxydans).